The following is a 274-amino-acid chain: HTH-type transcriptional regulator GadX (274 aa).

The region spanning 145–242 (TRVCTVINNN…GMTPTEYQER (98 aa)) is the HTH araC/xylS-type domain. 2 DNA-binding regions (H-T-H motif) span residues 162 to 183 (ARIASELLMSPSLLKKKLREEE) and 209 to 232 (IKRVAVSCGYHSVSYFIYVFRNYY).

Homodimer.

In terms of biological role, positively regulates the expression of about fifteen genes involved in acid resistance such as gadA, gadB and gadC. Depending on the conditions (growth phase and medium), can repress gadW. The sequence is that of HTH-type transcriptional regulator GadX (gadX) from Escherichia coli O157:H7.